The chain runs to 247 residues: Transmembrane protein 33 (247 aa).

At A2 the chain carries N-acetylalanine. Topologically, residues 2–31 (ADTTPNGPQGAGAVQFMMTNKLDTAMWLSR) are lumenal. The helical transmembrane segment at 32 to 52 (LFTVYCSALFVLPLLGLHEAA) threads the bilayer. The Cytoplasmic segment spans residues 53–100 (SFYQRALLANALTSALRLHQRLPHFQLSRAFLAQALLEDSCHYLLYSL). A helical membrane pass occupies residues 101 to 121 (IFVNSYPVTMSIFPVLLFSLL). The Lumenal segment spans residues 122–155 (HAATYTKKVLDARGSNSLPLLRSVLDKLSANQQN). Residues 156-176 (ILKFIACNEIFLMPATVFMLF) form a helical membrane-spanning segment. At 177 to 247 (SGQGSLLQPF…FISRLAPTVP (71 aa)) the chain is on the cytoplasmic side.

Belongs to the PER33/POM33 family. In terms of assembly, interacts with EIF2AK3. Interacts with ARL6IP1, isoform RTN1-A of RTN1, isoform RTN2-B of RTN2, isoform 3 of RTN3 and isoform 3 of RTN4. Interacts with RNF5. Interacts with RNF26. Interacts with PKD2. As to expression, prostate cancer and several cancer cell lines (at protein level). Widely expressed. Expressed at higher levels in endocrine-resistant breast cancer cells as compared to endocrine-sensitive breast cancer cells. Expressed at higher levels in early recurrence breast cancer tissues as compared to non-recurrent breast tumors.

The protein localises to the endoplasmic reticulum membrane. It localises to the melanosome. It is found in the nucleus envelope. Its function is as follows. Acts as a regulator of the tubular endoplasmic reticulum (ER) network by modulating intracellular calcium homeostasis. Mechanistically, stimulates PKD2 calcium-dependent activity. Suppresses the RTN3/4-induced formation of the ER tubules. Positively regulates PERK-mediated and IRE1-mediated unfolded protein response signaling. Plays an essential role in VEGF-mediated release of Ca(2+) from ER stores during angiogenesis. Also plays a role in the modulation of innate immune signaling through the cGAS-STING pathway by interacting with RNF26. Participates in lipid metabolism by acting as a downstream effector of the pyruvate kinase/PKM. Forms a complex with RNF5 to facilitate polyubiquitination and subsequent degradation of SCAP on the ER membrane. The sequence is that of Transmembrane protein 33 (TMEM33) from Homo sapiens (Human).